A 197-amino-acid chain; its full sequence is LexA repressor (197 aa).

The H-T-H motif DNA-binding region spans 28 to 47; sequence VREIARRFRITPRGALLHLI. Residues Ser-119 and Lys-156 each act as for autocatalytic cleavage activity in the active site.

This sequence belongs to the peptidase S24 family. As to quaternary structure, homodimer.

The enzyme catalyses Hydrolysis of Ala-|-Gly bond in repressor LexA.. Functionally, represses a number of genes involved in the response to DNA damage (SOS response), including recA and lexA. In the presence of single-stranded DNA, RecA interacts with LexA causing an autocatalytic cleavage which disrupts the DNA-binding part of LexA, leading to derepression of the SOS regulon and eventually DNA repair. The chain is LexA repressor from Thermotoga maritima (strain ATCC 43589 / DSM 3109 / JCM 10099 / NBRC 100826 / MSB8).